Reading from the N-terminus, the 122-residue chain is Aspartate 1-decarboxylase (122 aa).

Catalysis depends on S25, which acts as the Schiff-base intermediate with substrate; via pyruvic acid. S25 carries the pyruvic acid (Ser) modification. Substrate is bound at residue T57. Y58 serves as the catalytic Proton donor. A substrate-binding site is contributed by 73–75 (GAA).

This sequence belongs to the PanD family. Heterooctamer of four alpha and four beta subunits. Pyruvate is required as a cofactor. Post-translationally, is synthesized initially as an inactive proenzyme, which is activated by self-cleavage at a specific serine bond to produce a beta-subunit with a hydroxyl group at its C-terminus and an alpha-subunit with a pyruvoyl group at its N-terminus.

It is found in the cytoplasm. The enzyme catalyses L-aspartate + H(+) = beta-alanine + CO2. It functions in the pathway cofactor biosynthesis; (R)-pantothenate biosynthesis; beta-alanine from L-aspartate: step 1/1. Its function is as follows. Catalyzes the pyruvoyl-dependent decarboxylation of aspartate to produce beta-alanine. The protein is Aspartate 1-decarboxylase of Bordetella pertussis (strain Tohama I / ATCC BAA-589 / NCTC 13251).